We begin with the raw amino-acid sequence, 468 residues long: DNA polymerase IV 1 (468 aa).

In terms of domain architecture, UmuC spans Val-6–Gly-188. Positions 10 and 105 each coordinate Mg(2+). Residue Glu-106 is part of the active site.

It belongs to the DNA polymerase type-Y family. As to quaternary structure, monomer. The cofactor is Mg(2+).

The protein localises to the cytoplasm. It catalyses the reaction DNA(n) + a 2'-deoxyribonucleoside 5'-triphosphate = DNA(n+1) + diphosphate. In terms of biological role, poorly processive, error-prone DNA polymerase involved in untargeted mutagenesis. Copies undamaged DNA at stalled replication forks, which arise in vivo from mismatched or misaligned primer ends. These misaligned primers can be extended by PolIV. Exhibits no 3'-5' exonuclease (proofreading) activity. May be involved in translesional synthesis, in conjunction with the beta clamp from PolIII. The polypeptide is DNA polymerase IV 1 (dinB1) (Mycobacterium tuberculosis (strain CDC 1551 / Oshkosh)).